Here is a 430-residue protein sequence, read N- to C-terminus: Adenylosuccinate synthetase (430 aa).

GTP contacts are provided by residues 13–19 and 41–43; these read GDEGKGK and GHT. Catalysis depends on Asp14, which acts as the Proton acceptor. The Mg(2+) site is built by Asp14 and Gly41. IMP contacts are provided by residues 14–17, 39–42, Thr130, Arg144, Gln225, Thr240, and Arg304; these read DEGK and NAGH. His42 serves as the catalytic Proton donor. 300–306 is a substrate binding site; sequence ATTGRAR. GTP contacts are provided by residues Arg306, 332–334, and 414–416; these read KLD and STG.

This sequence belongs to the adenylosuccinate synthetase family. Homodimer. Mg(2+) serves as cofactor.

It localises to the cytoplasm. The catalysed reaction is IMP + L-aspartate + GTP = N(6)-(1,2-dicarboxyethyl)-AMP + GDP + phosphate + 2 H(+). Its pathway is purine metabolism; AMP biosynthesis via de novo pathway; AMP from IMP: step 1/2. Plays an important role in the de novo pathway of purine nucleotide biosynthesis. Catalyzes the first committed step in the biosynthesis of AMP from IMP. The sequence is that of Adenylosuccinate synthetase from Pseudomonas aeruginosa (strain LESB58).